The primary structure comprises 227 residues: tRNA pseudouridine synthase B (227 aa).

Aspartate 42 (nucleophile) is an active-site residue.

This sequence belongs to the pseudouridine synthase TruB family. Type 1 subfamily.

It carries out the reaction uridine(55) in tRNA = pseudouridine(55) in tRNA. Its function is as follows. Responsible for synthesis of pseudouridine from uracil-55 in the psi GC loop of transfer RNAs. This is tRNA pseudouridine synthase B from Ureaplasma parvum serovar 3 (strain ATCC 27815 / 27 / NCTC 11736).